A 311-amino-acid polypeptide reads, in one-letter code: Putative ankyrin repeat protein RF_0923 (311 aa).

ANK repeat units follow at residues 42 to 71, 77 to 106, 112 to 141, 147 to 176, and 182 to 213; these read IDNT…EQAI, NGNT…PQAI, NGNT…EQAI, and KGCT…AINH.

This is Putative ankyrin repeat protein RF_0923 from Rickettsia felis (strain ATCC VR-1525 / URRWXCal2) (Rickettsia azadi).